The sequence spans 131 residues: Small ribosomal subunit protein uS8 (131 aa).

It belongs to the universal ribosomal protein uS8 family. Part of the 30S ribosomal subunit. Contacts proteins S5 and S12.

In terms of biological role, one of the primary rRNA binding proteins, it binds directly to 16S rRNA central domain where it helps coordinate assembly of the platform of the 30S subunit. The protein is Small ribosomal subunit protein uS8 of Campylobacter hominis (strain ATCC BAA-381 / DSM 21671 / CCUG 45161 / LMG 19568 / NCTC 13146 / CH001A).